The chain runs to 311 residues: Porphobilinogen deaminase (311 aa).

Cys-241 carries the S-(dipyrrolylmethanemethyl)cysteine modification.

This sequence belongs to the HMBS family. In terms of assembly, monomer. Requires dipyrromethane as cofactor.

It catalyses the reaction 4 porphobilinogen + H2O = hydroxymethylbilane + 4 NH4(+). It functions in the pathway porphyrin-containing compound metabolism; protoporphyrin-IX biosynthesis; coproporphyrinogen-III from 5-aminolevulinate: step 2/4. Tetrapolymerization of the monopyrrole PBG into the hydroxymethylbilane pre-uroporphyrinogen in several discrete steps. The chain is Porphobilinogen deaminase from Campylobacter curvus (strain 525.92).